A 304-amino-acid polypeptide reads, in one-letter code: Homoserine O-acetyltransferase (304 aa).

Cys142 acts as the Acyl-thioester intermediate in catalysis. Substrate is bound by residues Lys163 and Ser191. Residue His234 is the Proton acceptor of the active site. Residue Glu236 is part of the active site. Arg248 is a binding site for substrate.

It belongs to the MetA family.

It is found in the cytoplasm. It carries out the reaction L-homoserine + acetyl-CoA = O-acetyl-L-homoserine + CoA. Its pathway is amino-acid biosynthesis; L-methionine biosynthesis via de novo pathway; O-acetyl-L-homoserine from L-homoserine: step 1/1. Transfers an acetyl group from acetyl-CoA to L-homoserine, forming acetyl-L-homoserine. The sequence is that of Homoserine O-acetyltransferase from Thermotoga petrophila (strain ATCC BAA-488 / DSM 13995 / JCM 10881 / RKU-1).